Here is a 287-residue protein sequence, read N- to C-terminus: 3-methyl-2-oxobutanoate hydroxymethyltransferase (287 aa).

Mg(2+) contacts are provided by Asp67 and Asp106. Residues 67–68 (DS), Asp106, and Lys136 contribute to the 3-methyl-2-oxobutanoate site. Mg(2+) is bound at residue Glu138. The active-site Proton acceptor is Glu204.

The protein belongs to the PanB family. In terms of assembly, homodecamer; pentamer of dimers. Requires Mg(2+) as cofactor.

The protein resides in the cytoplasm. It carries out the reaction 3-methyl-2-oxobutanoate + (6R)-5,10-methylene-5,6,7,8-tetrahydrofolate + H2O = 2-dehydropantoate + (6S)-5,6,7,8-tetrahydrofolate. The protein operates within cofactor biosynthesis; (R)-pantothenate biosynthesis; (R)-pantoate from 3-methyl-2-oxobutanoate: step 1/2. Its function is as follows. Catalyzes the reversible reaction in which hydroxymethyl group from 5,10-methylenetetrahydrofolate is transferred onto alpha-ketoisovalerate to form ketopantoate. This is 3-methyl-2-oxobutanoate hydroxymethyltransferase from Streptomyces avermitilis (strain ATCC 31267 / DSM 46492 / JCM 5070 / NBRC 14893 / NCIMB 12804 / NRRL 8165 / MA-4680).